The following is a 128-amino-acid chain: Large ribosomal subunit protein bL12 (128 aa).

Belongs to the bacterial ribosomal protein bL12 family. In terms of assembly, homodimer. Part of the ribosomal stalk of the 50S ribosomal subunit. Forms a multimeric L10(L12)X complex, where L10 forms an elongated spine to which 2 to 4 L12 dimers bind in a sequential fashion. Binds GTP-bound translation factors.

In terms of biological role, forms part of the ribosomal stalk which helps the ribosome interact with GTP-bound translation factors. Is thus essential for accurate translation. The chain is Large ribosomal subunit protein bL12 from Saccharopolyspora erythraea (strain ATCC 11635 / DSM 40517 / JCM 4748 / NBRC 13426 / NCIMB 8594 / NRRL 2338).